A 418-amino-acid polypeptide reads, in one-letter code: Tyrosine--tRNA ligase (418 aa).

Residue Y34 participates in L-tyrosine binding. The 'HIGH' region motif lies at 39–48 (PTADSLHLGH). Y169 and Q173 together coordinate L-tyrosine. Positions 229–233 (KFGKS) match the 'KMSKS' region motif. An ATP-binding site is contributed by K232. The 67-residue stretch at 352–418 (NNIVELLVSS…GKKKYFVLTY (67 aa)) folds into the S4 RNA-binding domain.

Belongs to the class-I aminoacyl-tRNA synthetase family. TyrS type 1 subfamily. Homodimer.

Its subcellular location is the cytoplasm. It carries out the reaction tRNA(Tyr) + L-tyrosine + ATP = L-tyrosyl-tRNA(Tyr) + AMP + diphosphate + H(+). Functionally, catalyzes the attachment of tyrosine to tRNA(Tyr) in a two-step reaction: tyrosine is first activated by ATP to form Tyr-AMP and then transferred to the acceptor end of tRNA(Tyr). The chain is Tyrosine--tRNA ligase from Streptococcus pneumoniae (strain CGSP14).